Reading from the N-terminus, the 185-residue chain is Ribosome-recycling factor (185 aa).

The protein belongs to the RRF family.

It is found in the cytoplasm. Responsible for the release of ribosomes from messenger RNA at the termination of protein biosynthesis. May increase the efficiency of translation by recycling ribosomes from one round of translation to another. This chain is Ribosome-recycling factor, found in Histophilus somni (strain 2336) (Haemophilus somnus).